A 482-amino-acid chain; its full sequence is Capsule synthesis positive regulator AcpB (482 aa).

PRD domains are found at residues 165 to 270 (PFEK…YKDI) and 283 to 395 (EGNL…YTSN).

This sequence belongs to the AtxA/AcpA family.

AcpB and AcpA regulate cap gene expression and capsule synthesis. This chain is Capsule synthesis positive regulator AcpB (acpB), found in Bacillus anthracis.